The chain runs to 72 residues: Translation initiation factor IF-1 (72 aa).

Residues 1–72 (MAKEETIQMQ…SRARITFRAK (72 aa)) enclose the S1-like domain.

This sequence belongs to the IF-1 family. As to quaternary structure, component of the 30S ribosomal translation pre-initiation complex which assembles on the 30S ribosome in the order IF-2 and IF-3, IF-1 and N-formylmethionyl-tRNA(fMet); mRNA recruitment can occur at any time during PIC assembly.

The protein resides in the cytoplasm. Its function is as follows. One of the essential components for the initiation of protein synthesis. Stabilizes the binding of IF-2 and IF-3 on the 30S subunit to which N-formylmethionyl-tRNA(fMet) subsequently binds. Helps modulate mRNA selection, yielding the 30S pre-initiation complex (PIC). Upon addition of the 50S ribosomal subunit IF-1, IF-2 and IF-3 are released leaving the mature 70S translation initiation complex. This is Translation initiation factor IF-1 from Nitrosospira multiformis (strain ATCC 25196 / NCIMB 11849 / C 71).